A 162-amino-acid chain; its full sequence is NADH-quinone oxidoreductase subunit I (162 aa).

2 consecutive 4Fe-4S ferredoxin-type domains span residues 53-83 and 93-122; these read LRRY…IEAE and TRYD…EGPN. [4Fe-4S] cluster contacts are provided by Cys-63, Cys-66, Cys-69, Cys-73, Cys-102, Cys-105, Cys-108, and Cys-112.

The protein belongs to the complex I 23 kDa subunit family. In terms of assembly, NDH-1 is composed of 14 different subunits. Subunits NuoA, H, J, K, L, M, N constitute the membrane sector of the complex. [4Fe-4S] cluster serves as cofactor.

The protein localises to the cell inner membrane. The enzyme catalyses a quinone + NADH + 5 H(+)(in) = a quinol + NAD(+) + 4 H(+)(out). Its function is as follows. NDH-1 shuttles electrons from NADH, via FMN and iron-sulfur (Fe-S) centers, to quinones in the respiratory chain. The immediate electron acceptor for the enzyme in this species is believed to be ubiquinone. Couples the redox reaction to proton translocation (for every two electrons transferred, four hydrogen ions are translocated across the cytoplasmic membrane), and thus conserves the redox energy in a proton gradient. This chain is NADH-quinone oxidoreductase subunit I, found in Rhodospirillum rubrum (strain ATCC 11170 / ATH 1.1.1 / DSM 467 / LMG 4362 / NCIMB 8255 / S1).